Here is a 354-residue protein sequence, read N- to C-terminus: Inactive ADP-ribosyltransferase ARH2 (354 aa).

At Ser27 the chain carries Phosphoserine.

It belongs to the ADP-ribosylglycohydrolase family.

It is found in the cytoplasm. It localises to the myofibril. Its subcellular location is the sarcomere. In terms of biological role, required for myofibril assembly and outgrowth of the cardiac chambers in the developing heart. Appears to be catalytically inactive, showing no activity against O-acetyl-ADP-ribose. The protein is Inactive ADP-ribosyltransferase ARH2 (ADPRHL1) of Homo sapiens (Human).